The primary structure comprises 323 residues: tRNA dimethylallyltransferase (323 aa).

12-19 (GPTAAGKT) serves as a coordination point for ATP. A substrate-binding site is contributed by 14–19 (TAAGKT). Interaction with substrate tRNA regions lie at residues 37–40 (DSAL) and 161–165 (QRLIR).

The protein belongs to the IPP transferase family. In terms of assembly, monomer. The cofactor is Mg(2+).

The catalysed reaction is adenosine(37) in tRNA + dimethylallyl diphosphate = N(6)-dimethylallyladenosine(37) in tRNA + diphosphate. Functionally, catalyzes the transfer of a dimethylallyl group onto the adenine at position 37 in tRNAs that read codons beginning with uridine, leading to the formation of N6-(dimethylallyl)adenosine (i(6)A). This Pseudomonas putida (strain W619) protein is tRNA dimethylallyltransferase.